The chain runs to 621 residues: Very-long-chain aldehyde decarbonylase GL1-5 (621 aa).

Helical transmembrane passes span 99 to 119 (IILSGILLYLGALYVPGGQHL), 126 to 146 (GAGLIALLHAGPVEFLYYWFH), 186 to 206 (LLFSIPLIACALTGTASIIAF), 224 to 244 (FELVPSWLFTWFPPLKYLMYT), and 332 to 352 (MWPLSWLSMVLTWTYGSSFTV). Positions 138 to 272 (VEFLYYWFHR…MPFYDYIYNT (135 aa)) constitute a Fatty acid hydroxylase domain.

This sequence belongs to the sterol desaturase family. As to quaternary structure, homodimer. Expressed in panicles, developing spikelets, stamens and hulls and, at low levels, in roots, developing seeds, flag leaves and seedling shoots. Strongly expressed in the epidermal cells of anthers.

It is found in the endoplasmic reticulum membrane. It catalyses the reaction a long-chain fatty aldehyde + 2 NADPH + O2 + H(+) = a long-chain alkane + formate + 2 NADP(+) + H2O. Its function is as follows. Aldehyde decarbonylase involved in the conversion of aldehydes to alkanes. Core component of a very-long-chain alkane synthesis complex. Required for the biosynthesis of very-long-chain fatty acids (including polyesters) in cuticles, anther tapetum and pollen exine. The polypeptide is Very-long-chain aldehyde decarbonylase GL1-5 (Oryza sativa subsp. japonica (Rice)).